Consider the following 285-residue polypeptide: MSRNFSMQAKVFIKPLVLFQIIDAYERRPKGDNQVMGTLLGRNKEGHFEITNCFPVPHKEHPEINRIDLDISYASEFLELNMLTYSNERVLGWFSTGKSVSRSASLLHDYYARECGEIQPVHLVMDATLKSQRLSTRLYCAVEIGVPGGTKGLMFSLVPLEISNGNSDLVALRSLEKQSLQQGTKQMERFLPELVQVVDATRDIQQRLDLVLRYINDVLARKRKPDNVIGRALYAALTAVPLLDSEKFRLMFNTNLRDMLMAITLSTMIKTQLEISEKLSCMQDQ.

The region spanning 11 to 145 (VFIKPLVLFQ…TRLYCAVEIG (135 aa)) is the MPN domain.

The protein belongs to the eIF-3 subunit F family. As to quaternary structure, component of the eukaryotic translation initiation factor 3 (eIF-3) complex. The eIF-3 complex interacts with pix.

The protein localises to the cytoplasm. Functionally, component of the eukaryotic translation initiation factor 3 (eIF-3) complex, which is involved in protein synthesis of a specialized repertoire of mRNAs and, together with other initiation factors, stimulates binding of mRNA and methionyl-tRNAi to the 40S ribosome. The eIF-3 complex specifically targets and initiates translation of a subset of mRNAs involved in cell proliferation. The sequence is that of Eukaryotic translation initiation factor 3 subunit F-2 from Drosophila yakuba (Fruit fly).